Here is a 458-residue protein sequence, read N- to C-terminus: MTATPLYRQDTIAAIATPPGRGGVGIIRLSGPASRDLAERILGHCPAPRHAHYGPFYDADAQVLDEGIALFFPGPHSFTGEDVLELQGHGGPVIMDLLLARCVALGARLARPGEFSERAFLNDKLDLAQAEAIADLIDASSRAAAENALRSLQGEFSTRVSALVDKLIELRMFVEAAIDFPEEEIDFLADGKVAAMLQGAQETLGEVRAAAGQGALMREGMNVVIAGRPNAGKSSLLNALTERDSAIVTDIEGTTRDVLREYIHIDGMPLHVIDTAGLRDTPDAIEKIGVARAWEEIEKADRVLLLVDATTTTQTDPMQLWPEFVARLPHPERLTLVRNKIDESGETEQSDLSTSPPIVRLSAKTGLGVDNLKEHLKAVMGFDATTEGRFSARRRHLDALDRAGDALDNGIAQLRGHGAGELLAEDLRDAQQALSEITGEFTADDLLGEIFGSFCIGK.

(6S)-5-formyl-5,6,7,8-tetrahydrofolate is bound by residues Arg28, Glu85, and Lys124. Residues 220–381 (GMNVVIAGRP…LKEHLKAVMG (162 aa)) enclose the TrmE-type G domain. Asn230 serves as a coordination point for K(+). Residues 230–235 (NAGKSS), 249–255 (TDIEGTT), and 274–277 (DTAG) each bind GTP. A Mg(2+)-binding site is contributed by Ser234. Positions 249, 251, and 254 each coordinate K(+). Thr255 provides a ligand contact to Mg(2+). Lys458 contributes to the (6S)-5-formyl-5,6,7,8-tetrahydrofolate binding site.

This sequence belongs to the TRAFAC class TrmE-Era-EngA-EngB-Septin-like GTPase superfamily. TrmE GTPase family. Homodimer. Heterotetramer of two MnmE and two MnmG subunits. K(+) is required as a cofactor.

Its subcellular location is the cytoplasm. Exhibits a very high intrinsic GTPase hydrolysis rate. Involved in the addition of a carboxymethylaminomethyl (cmnm) group at the wobble position (U34) of certain tRNAs, forming tRNA-cmnm(5)s(2)U34. The protein is tRNA modification GTPase MnmE of Chromohalobacter salexigens (strain ATCC BAA-138 / DSM 3043 / CIP 106854 / NCIMB 13768 / 1H11).